The sequence spans 140 residues: FK506-binding protein 2 (140 aa).

The N-terminal stretch at 1-19 (MKFTTGLSVLLFFVLQVFA) is a signal peptide. In terms of domain architecture, PPIase FKBP-type spans 43 to 132 (GDVVSVHYTG…IFETELVDIQ (90 aa)).

It belongs to the FKBP-type PPIase family. FKBP2 subfamily.

The protein resides in the endoplasmic reticulum. The enzyme catalyses [protein]-peptidylproline (omega=180) = [protein]-peptidylproline (omega=0). Inhibited by both FK506 and rapamycin. PPIases accelerate the folding of proteins. It catalyzes the cis-trans isomerization of proline imidic peptide bonds in oligopeptides. In Kluyveromyces lactis (strain ATCC 8585 / CBS 2359 / DSM 70799 / NBRC 1267 / NRRL Y-1140 / WM37) (Yeast), this protein is FK506-binding protein 2 (FPR2).